Consider the following 288-residue polypeptide: S-methyl-5'-thioadenosine phosphorylase (288 aa).

Residues serine 12, 54-55 (RH), and 87-88 (SA) contribute to the phosphate site. Residue methionine 186 participates in substrate binding. Threonine 187 is a phosphate binding site. Residue 210–212 (DYD) coordinates substrate.

The protein belongs to the PNP/MTAP phosphorylase family. MTAP subfamily. In terms of assembly, homohexamer. Dimer of a homotrimer.

The enzyme catalyses S-methyl-5'-thioadenosine + phosphate = 5-(methylsulfanyl)-alpha-D-ribose 1-phosphate + adenine. Its pathway is amino-acid biosynthesis; L-methionine biosynthesis via salvage pathway; S-methyl-5-thio-alpha-D-ribose 1-phosphate from S-methyl-5'-thioadenosine (phosphorylase route): step 1/1. Its function is as follows. Catalyzes the reversible phosphorylation of S-methyl-5'-thioadenosine (MTA) to adenine and 5-methylthioribose-1-phosphate. Involved in the breakdown of MTA, a major by-product of polyamine biosynthesis. Responsible for the first step in the methionine salvage pathway after MTA has been generated from S-adenosylmethionine. Has broad substrate specificity with 6-aminopurine nucleosides as preferred substrates. This Chloroflexus aurantiacus (strain ATCC 29366 / DSM 635 / J-10-fl) protein is S-methyl-5'-thioadenosine phosphorylase.